The following is a 243-amino-acid chain: Type II restriction enzyme NlaIV (243 aa).

It carries out the reaction Endonucleolytic cleavage of DNA to give specific double-stranded fragments with terminal 5'-phosphates.. In terms of biological role, a P subtype restriction enzyme that recognizes the double-stranded sequence 5'-GGNNCC-3' and cleaves after N-3. This Neisseria lactamica protein is Type II restriction enzyme NlaIV (nlaIVR).